Consider the following 198-residue polypeptide: Type II secretion system protein J (198 aa).

The propeptide at 1 to 7 (MIRRSSG) is leader sequence. Phe-8 is subject to N-methylphenylalanine. The chain crosses the membrane as a helical span at residues 8 to 28 (FTLVEMLLALAILAALSVAAV).

This sequence belongs to the GSP J family. In terms of assembly, type II secretion is composed of four main components: the outer membrane complex, the inner membrane complex, the cytoplasmic secretion ATPase and the periplasm-spanning pseudopilus. Interacts with core component PulG. In terms of processing, cleaved by prepilin peptidase. Methylated by prepilin peptidase at the amino group of the N-terminal phenylalanine once the leader sequence is cleaved by prepilin peptidase.

The protein resides in the cell inner membrane. Component of the type II secretion system required for the energy-dependent secretion of extracellular factors such as proteases and toxins from the periplasm. Part of the pseudopilus tip complex that is critical for the recognition and binding of secretion substrates. The chain is Type II secretion system protein J (pulJ) from Klebsiella pneumoniae.